The sequence spans 293 residues: uncharacterized protein (293 aa).

Disordered regions lie at residues 20-148 and 226-283; these read ELHS…NNNT and RENQ…GNKN. Composition is skewed to acidic residues over residues 37-47, 56-91, and 99-112; these read LEDDEEYDDDQ, EEFD…DDEM, and NIDD…EEEQ. Composition is skewed to low complexity over residues 117 to 148 and 232 to 283; these read TNNN…NNNT and NSNS…GNKN.

This is an uncharacterized protein from Dictyostelium discoideum (Social amoeba).